The chain runs to 105 residues: UPF0235 protein A1G_07140 (105 aa).

It belongs to the UPF0235 family.

The sequence is that of UPF0235 protein A1G_07140 from Rickettsia rickettsii (strain Sheila Smith).